The following is a 269-amino-acid chain: Tryptophan synthase alpha chain (269 aa).

Residues Glu-54 and Asp-65 each act as proton acceptor in the active site.

This sequence belongs to the TrpA family. In terms of assembly, tetramer of two alpha and two beta chains.

The enzyme catalyses (1S,2R)-1-C-(indol-3-yl)glycerol 3-phosphate + L-serine = D-glyceraldehyde 3-phosphate + L-tryptophan + H2O. It participates in amino-acid biosynthesis; L-tryptophan biosynthesis; L-tryptophan from chorismate: step 5/5. Its function is as follows. The alpha subunit is responsible for the aldol cleavage of indoleglycerol phosphate to indole and glyceraldehyde 3-phosphate. This chain is Tryptophan synthase alpha chain, found in Synechococcus sp. (strain CC9902).